A 178-amino-acid polypeptide reads, in one-letter code: ATP-dependent protease subunit HslV (178 aa).

Thr7 is an active-site residue. Na(+) is bound by residues Gly162, Cys165, and Thr168.

It belongs to the peptidase T1B family. HslV subfamily. In terms of assembly, a double ring-shaped homohexamer of HslV is capped on each side by a ring-shaped HslU homohexamer. The assembly of the HslU/HslV complex is dependent on binding of ATP.

The protein resides in the cytoplasm. The enzyme catalyses ATP-dependent cleavage of peptide bonds with broad specificity.. Allosterically activated by HslU binding. Functionally, protease subunit of a proteasome-like degradation complex believed to be a general protein degrading machinery. This is ATP-dependent protease subunit HslV from Herminiimonas arsenicoxydans.